The following is a 494-amino-acid chain: Ectonucleoside triphosphate diphosphohydrolase 8 (494 aa).

At 1–8 (MRLSWKER) the chain is on the cytoplasmic side. Residues 9 to 29 (VFMVLLGVAAASGLTMLILIL) traverse the membrane as a helical segment. Topologically, residues 30–465 (VKATNVLLPA…LTQWRAQSYS (436 aa)) are extracellular. An intrachain disulfide couples C78 to C102. E168 serves as the catalytic Proton acceptor. C245 and C291 are joined by a disulfide. 2 N-linked (GlcNAc...) asparagine glycosylation sites follow: N299 and N303. An intrachain disulfide couples C328 to C334. A glycan (N-linked (GlcNAc...) asparagine) is linked at N362. A disulfide bridge links C380 with C402. The chain crosses the membrane as a helical span at residues 466-486 (IWIAGVVFAVLTLVAILGAAA). Topologically, residues 487–494 (VQLFWTQD) are cytoplasmic.

Belongs to the GDA1/CD39 NTPase family. It depends on Ca(2+) as a cofactor. Requires Mg(2+) as cofactor. N-glycosylated. In terms of tissue distribution, present in liver, and at lower level in jejunum and kidney. Limited to the canalicular domain of hepatocytes (at protein level).

Its subcellular location is the cell membrane. It catalyses the reaction a ribonucleoside 5'-triphosphate + 2 H2O = a ribonucleoside 5'-phosphate + 2 phosphate + 2 H(+). Functionally, canalicular ectonucleoside NTPDase responsible for the main hepatic NTPDase activity. Ectonucleoside NTPDases catalyze the hydrolysis of gamma- and beta-phosphate residues of nucleotides, playing a central role in concentration of extracellular nucleotides. Has activity toward ATP, ADP, UTP and UDP, but not toward AMP. This is Ectonucleoside triphosphate diphosphohydrolase 8 (Entpd8) from Rattus norvegicus (Rat).